We begin with the raw amino-acid sequence, 156 residues long: MPRRRVVGQRKILPDPKFGSELLAKFVNVVMVDGKKSVSEAIVYGALDIIATKSGKDHLAVFEEALDNIRPAVEVKSRRVGGATYQVPVEVRPVRRNALAMRWLVDAARKRGEKSMAQRLAGELLDAADNKGSSVKKREDVHRMAEANKAFAHFRW.

This sequence belongs to the universal ribosomal protein uS7 family. As to quaternary structure, part of the 30S ribosomal subunit. Contacts proteins S9 and S11.

Functionally, one of the primary rRNA binding proteins, it binds directly to 16S rRNA where it nucleates assembly of the head domain of the 30S subunit. Is located at the subunit interface close to the decoding center, probably blocks exit of the E-site tRNA. The polypeptide is Small ribosomal subunit protein uS7 (Aeromonas salmonicida (strain A449)).